Reading from the N-terminus, the 227-residue chain is 2,3-bisphosphoglycerate-dependent phosphoglycerate mutase (227 aa).

Residues 7 to 14, 20 to 21, arginine 59, 86 to 89, lysine 97, 113 to 114, and 182 to 183 each bind substrate; these read RHGFSEWN, TG, ERHY, RR, and GN. Catalysis depends on histidine 8, which acts as the Tele-phosphohistidine intermediate. Glutamate 86 functions as the Proton donor/acceptor in the catalytic mechanism.

Belongs to the phosphoglycerate mutase family. BPG-dependent PGAM subfamily. Homodimer.

The enzyme catalyses (2R)-2-phosphoglycerate = (2R)-3-phosphoglycerate. Its pathway is carbohydrate degradation; glycolysis; pyruvate from D-glyceraldehyde 3-phosphate: step 3/5. Catalyzes the interconversion of 2-phosphoglycerate and 3-phosphoglycerate. The chain is 2,3-bisphosphoglycerate-dependent phosphoglycerate mutase from Actinobacillus pleuropneumoniae serotype 5b (strain L20).